Reading from the N-terminus, the 765-residue chain is Transient receptor potential cation channel subfamily V member 6 (765 aa).

The Cytoplasmic segment spans residues 1-367; that stretch reads MGPLQGDGGP…SLKWKRYGRP (367 aa). ANK repeat units follow at residues 84–114, 118–147, and 156–185; these read IWES…KVHQ, MGET…ELVF, and EGQT…SVSA. The tract at residues 133-143 is interaction with calmodulin; sequence EAAMVLMEAAP. Tyr201 carries the post-translational modification Phosphotyrosine; by SRC. 3 ANK repeats span residues 202–231, 235–277, and 279–308; these read FGEH…DIRA, LGNT…LVPN, and QGLT…HTQW. Residues 368-388 traverse the membrane as a helical segment; the sequence is YFCMLGAIYLLYIICFTMCCI. Residues 389–425 lie on the Extracellular side of the membrane; sequence YRPLKPRTNNRTSPRDNTLLQQKLLQEAYMTPKDDIR. Asn398 is a glycosylation site (N-linked (GlcNAc...) asparagine). A helical membrane pass occupies residues 426–448; the sequence is LVGELVTVIGAIIILLVEVPDIF. Residues 449 to 463 lie on the Cytoplasmic side of the membrane; the sequence is RMGVTRFFGQTILGG. The helical transmembrane segment at 464–483 threads the bilayer; the sequence is PFHVLIITYAFMVLVTMVMR. The Extracellular portion of the chain corresponds to 484 to 489; sequence LISASG. Residues 490-509 traverse the membrane as a helical segment; the sequence is EVVPMSFALVLGWCNVMYFA. At 510-529 the chain is on the cytoplasmic side; that stretch reads RGFQMLGPFTIMIQKMIFGD. Residues 530 to 552 form a helical membrane-spanning segment; sequence LMRFCWLMAVVILGFASAFYIIF. Topologically, residues 553–565 are extracellular; it reads QTEDPEELGHFYD. Residues 566–585 constitute an intramembrane region (pore-forming); sequence YPMALFSTFELFLTIIDGPA. A Selectivity filter motif is present at residues 581 to 585; the sequence is IDGPA. Asp582 contacts Ca(2+). At 586 to 596 the chain is on the extracellular side; that stretch reads NYNVDLPFMYS. Residues 597 to 617 traverse the membrane as a helical segment; that stretch reads ITYAAFAIIATLLMLNLLIAM. At 618–765 the chain is on the cytoplasmic side; sequence MGDTHWRVAH…EDGESWEYQI (148 aa). The tract at residues 638 to 642 is interaction with S100A10; it reads VATTV. The tract at residues 731–751 is interaction with calmodulin; that stretch reads SSANWERLRQGTLRRDLRGII. The residue at position 742 (Thr742) is a Phosphothreonine; by PKC/PRKCA.

The protein belongs to the transient receptor (TC 1.A.4) family. TrpV subfamily. TRPV6 sub-subfamily. As to quaternary structure, homotetramer. Probably also forms heterotetramers with TRPV5. Interacts with TRPV5. Interacts with S100A10 and probably with the ANAX2-S100A10 heterotetramer. The interaction with S100A10 is required for the trafficking to the plasma membrane. Interacts with BSPRY. Interacts with TCAF1 and TCAF2 isoform 2. Interacts with calmodulin. Post-translationally, glycosylated. Phosphorylation at Tyr-201 by SRC leads to an increased calcium influx through the channel. Probably dephosphorylated at this site by PTPN1. Phosphorylation by PRKCA at the calmodulin binding site delays channel inactivation. In terms of tissue distribution, expressed at high levels in the gastrointestinal tract, including esophagus, stomach, duodenum, jejunum, ileum and colon, and in pancreas, placenta, prostate and salivary gland. Expressed at moderate levels in liver, kidney and testis. Expressed in trophoblasts of placenta villus trees (at protein level). Expressed in locally advanced prostate cancer, metastatic and androgen-insensitive prostatic lesions but not detected in healthy prostate tissue and benign prostatic hyperplasia.

It is found in the cell membrane. The catalysed reaction is Ca(2+)(in) = Ca(2+)(out). Its function is as follows. Calcium selective cation channel that mediates Ca(2+) uptake in various tissues, including the intestine. Important for normal Ca(2+) ion homeostasis in the body, including bone and skin. The channel is activated by low internal calcium level, probably including intracellular calcium store depletion, and the current exhibits an inward rectification. Inactivation includes both a rapid Ca(2+)-dependent and a slower Ca(2+)-calmodulin-dependent mechanism; the latter may be regulated by phosphorylation. In vitro, is slowly inhibited by Mg(2+) in a voltage-independent manner. Heteromeric assembly with TRPV5 seems to modify channel properties. TRPV5-TRPV6 heteromultimeric concatemers exhibit voltage-dependent gating. This chain is Transient receptor potential cation channel subfamily V member 6 (TRPV6), found in Homo sapiens (Human).